The following is a 406-amino-acid chain: Peptidase T (406 aa).

Zn(2+) is bound at residue His-78. Asp-80 is a catalytic residue. Asp-139 contacts Zn(2+). The active-site Proton acceptor is Glu-173. Residues Glu-174, Asp-196, and His-378 each coordinate Zn(2+).

It belongs to the peptidase M20B family. The cofactor is Zn(2+).

It localises to the cytoplasm. The catalysed reaction is Release of the N-terminal residue from a tripeptide.. Functionally, cleaves the N-terminal amino acid of tripeptides. The chain is Peptidase T from Clostridium perfringens (strain 13 / Type A).